We begin with the raw amino-acid sequence, 356 residues long: UDP-N-acetylglucosamine--N-acetylmuramyl-(pentapeptide) pyrophosphoryl-undecaprenol N-acetylglucosamine transferase (356 aa).

UDP-N-acetyl-alpha-D-glucosamine is bound by residues 12–14 (TGG), Asn-124, Arg-163, Ser-188, Ile-242, 261–266 (ALTVCE), and Gln-287.

The protein belongs to the glycosyltransferase 28 family. MurG subfamily.

The protein resides in the cell inner membrane. It catalyses the reaction di-trans,octa-cis-undecaprenyl diphospho-N-acetyl-alpha-D-muramoyl-L-alanyl-D-glutamyl-meso-2,6-diaminopimeloyl-D-alanyl-D-alanine + UDP-N-acetyl-alpha-D-glucosamine = di-trans,octa-cis-undecaprenyl diphospho-[N-acetyl-alpha-D-glucosaminyl-(1-&gt;4)]-N-acetyl-alpha-D-muramoyl-L-alanyl-D-glutamyl-meso-2,6-diaminopimeloyl-D-alanyl-D-alanine + UDP + H(+). Its pathway is cell wall biogenesis; peptidoglycan biosynthesis. In terms of biological role, cell wall formation. Catalyzes the transfer of a GlcNAc subunit on undecaprenyl-pyrophosphoryl-MurNAc-pentapeptide (lipid intermediate I) to form undecaprenyl-pyrophosphoryl-MurNAc-(pentapeptide)GlcNAc (lipid intermediate II). This is UDP-N-acetylglucosamine--N-acetylmuramyl-(pentapeptide) pyrophosphoryl-undecaprenol N-acetylglucosamine transferase from Stutzerimonas stutzeri (strain A1501) (Pseudomonas stutzeri).